A 147-amino-acid polypeptide reads, in one-letter code: Large ribosomal subunit protein bL9 (147 aa).

It belongs to the bacterial ribosomal protein bL9 family.

Functionally, binds to the 23S rRNA. The sequence is that of Large ribosomal subunit protein bL9 from Exiguobacterium sp. (strain ATCC BAA-1283 / AT1b).